We begin with the raw amino-acid sequence, 606 residues long: NADH-ubiquinone oxidoreductase chain 5 (606 aa).

Transmembrane regions (helical) follow at residues 3–23 (VINLIPTLTLTSLIILTLPIT), 38–58 (ITKMAVTCAFAISLIPTLLFL), 87–107 (FFSLTFMPIALFITWSIMEFS), 124–144 (LLLFLITMLILVSANNLLQLF), 180–200 (IGDMGFIMMMAWFIIHLNSWE), 216–236 (LLGLLLASAGKSAQFGLHPWL), 244–264 (TPVSALLHSSTMVMAGVFTLI), 276–296 (IQTSTLCLGAITTLFTAICAL), 304–323 (IIALSTSSQLGLMMVTIGIN), 328–350 (AFTHMCTHAFFKAMLFLSSGSII), 369–389 (MPITSTAIIIGSLALTGMPFL), 404–424 (MSYINTWALLITLIAVSMTAS), 460–480 (LILGSIFMGFFISMNTIPHTT), 483–503 (MTMPPHLKFMALAVTLLGFTV), and 586–606 (LMKLYFLSFLLSITLGLLITL).

It belongs to the complex I subunit 5 family. Core subunit of respiratory chain NADH dehydrogenase (Complex I) which is composed of 45 different subunits.

The protein resides in the mitochondrion inner membrane. The catalysed reaction is a ubiquinone + NADH + 5 H(+)(in) = a ubiquinol + NAD(+) + 4 H(+)(out). Functionally, core subunit of the mitochondrial membrane respiratory chain NADH dehydrogenase (Complex I) which catalyzes electron transfer from NADH through the respiratory chain, using ubiquinone as an electron acceptor. Essential for the catalytic activity and assembly of complex I. This chain is NADH-ubiquinone oxidoreductase chain 5 (MT-ND5), found in Elephas maximus (Indian elephant).